A 117-amino-acid polypeptide reads, in one-letter code: Large ribosomal subunit protein bL20c (117 aa).

It belongs to the bacterial ribosomal protein bL20 family.

The protein localises to the plastid. Its subcellular location is the chloroplast. Its function is as follows. Binds directly to 23S ribosomal RNA and is necessary for the in vitro assembly process of the 50S ribosomal subunit. It is not involved in the protein synthesizing functions of that subunit. This is Large ribosomal subunit protein bL20c from Manihot esculenta (Cassava).